We begin with the raw amino-acid sequence, 445 residues long: Tubulin beta chain (445 aa).

Residues glutamine 11, glutamate 69, serine 138, glycine 142, threonine 143, glycine 144, asparagine 204, and asparagine 226 each contribute to the GTP site. Glutamate 69 lines the Mg(2+) pocket. Residues 426 to 445 are disordered; the sequence is QDATAEEEGEFEEEEGDVEA. The segment covering 429 to 445 has biased composition (acidic residues); it reads TAEEEGEFEEEEGDVEA.

It belongs to the tubulin family. Dimer of alpha and beta chains. A typical microtubule is a hollow water-filled tube with an outer diameter of 25 nm and an inner diameter of 15 nM. Alpha-beta heterodimers associate head-to-tail to form protofilaments running lengthwise along the microtubule wall with the beta-tubulin subunit facing the microtubule plus end conferring a structural polarity. Microtubules usually have 13 protofilaments but different protofilament numbers can be found in some organisms and specialized cells. Interacts with DCX/apicortin; the interaction stabilizes microtubule assembly. Mg(2+) serves as cofactor.

Its subcellular location is the cytoplasm. The protein resides in the cytoskeleton. Tubulin is the major constituent of microtubules, a cylinder consisting of laterally associated linear protofilaments composed of alpha- and beta-tubulin heterodimers. Microtubules grow by the addition of GTP-tubulin dimers to the microtubule end, where a stabilizing cap forms. Below the cap, tubulin dimers are in GDP-bound state, owing to GTPase activity of alpha-tubulin. In Plasmodium falciparum, this protein is Tubulin beta chain.